The sequence spans 269 residues: Tryptophan synthase alpha chain (269 aa).

Catalysis depends on proton acceptor residues Glu50 and Asp61.

This sequence belongs to the TrpA family. Tetramer of two alpha and two beta chains.

The catalysed reaction is (1S,2R)-1-C-(indol-3-yl)glycerol 3-phosphate + L-serine = D-glyceraldehyde 3-phosphate + L-tryptophan + H2O. It participates in amino-acid biosynthesis; L-tryptophan biosynthesis; L-tryptophan from chorismate: step 5/5. Functionally, the alpha subunit is responsible for the aldol cleavage of indoleglycerol phosphate to indole and glyceraldehyde 3-phosphate. The polypeptide is Tryptophan synthase alpha chain (Francisella tularensis subsp. tularensis (strain WY96-3418)).